We begin with the raw amino-acid sequence, 297 residues long: MPIEDKRMRIMDFINFVRKPDSLSCIIQEYRAIVPEQEDGASKSCNQAVNRAQDENNALPIVRLVHSRVNLFSKEKVMSARYVDGYNHKQKFIITINSCENNTDKYLQMLWDNNVQIVVTTSSHAEKNNFNRFWSLNERTVITYNNFQIETLEIITKPHFVLTLLVLTDQKGQARKLSHFQYTAWPADGFSHDPKAFLDFFFNIDSLYADLRKHKTIGNVGPITIDCIDNNSSSEVFCVLDICLTEVKKTGMLSIANAVKKVRQKKYGCMNRLNDYVFCYHLIHAYLSMTFDIVKVR.

Positions 21–286 (DSLSCIIQEY…VFCYHLIHAY (266 aa)) constitute a Tyrosine-protein phosphatase domain. Cys227 acts as the Phosphocysteine intermediate in catalysis.

It belongs to the protein-tyrosine phosphatase family.

It carries out the reaction O-phospho-L-tyrosyl-[protein] + H2O = L-tyrosyl-[protein] + phosphate. The sequence is that of Probable tyrosine phosphatase protein J2 (J3) from Microplitis demolitor (Parasitoid wasp).